We begin with the raw amino-acid sequence, 372 residues long: Chaperone protein DnaJ (372 aa).

The J domain maps to 5–70; the sequence is DYYDLLEVGR…EKRAGYDRYG (66 aa). A CR-type zinc finger spans residues 134–212; the sequence is GIQAPIHYVT…CGGSGRRRDE (79 aa). Zn(2+) is bound by residues C147, C150, C164, C167, C186, C189, C200, and C203. CXXCXGXG motif repeat units follow at residues 147–154, 164–171, 186–193, and 200–207; these read CDTCQGTG, CHTCQGSG, CTTCYGEG, and CKKCGGSG.

Belongs to the DnaJ family. As to quaternary structure, homodimer. Requires Zn(2+) as cofactor.

The protein resides in the cytoplasm. Participates actively in the response to hyperosmotic and heat shock by preventing the aggregation of stress-denatured proteins and by disaggregating proteins, also in an autonomous, DnaK-independent fashion. Unfolded proteins bind initially to DnaJ; upon interaction with the DnaJ-bound protein, DnaK hydrolyzes its bound ATP, resulting in the formation of a stable complex. GrpE releases ADP from DnaK; ATP binding to DnaK triggers the release of the substrate protein, thus completing the reaction cycle. Several rounds of ATP-dependent interactions between DnaJ, DnaK and GrpE are required for fully efficient folding. Also involved, together with DnaK and GrpE, in the DNA replication of plasmids through activation of initiation proteins. The sequence is that of Chaperone protein DnaJ from Wolbachia pipientis wMel.